Reading from the N-terminus, the 118-residue chain is Basic phospholipase A2 2 (118 aa).

7 disulfide bridges follow: cysteine 11–cysteine 71, cysteine 27–cysteine 117, cysteine 29–cysteine 45, cysteine 44–cysteine 98, cysteine 51–cysteine 91, cysteine 60–cysteine 84, and cysteine 78–cysteine 89. Tyrosine 28, glycine 30, and glycine 32 together coordinate Ca(2+). The active site involves histidine 48. Aspartate 49 is a binding site for Ca(2+). Aspartate 92 is an active-site residue.

This sequence belongs to the phospholipase A2 family. Group I subfamily. D49 sub-subfamily. Ca(2+) is required as a cofactor. Expressed by the venom gland.

The protein localises to the secreted. The catalysed reaction is a 1,2-diacyl-sn-glycero-3-phosphocholine + H2O = a 1-acyl-sn-glycero-3-phosphocholine + a fatty acid + H(+). In terms of biological role, snake venom phospholipase A2 (PLA2) that inhibits neuromuscular transmission by blocking acetylcholine release from the nerve termini. PLA2 catalyzes the calcium-dependent hydrolysis of the 2-acyl groups in 3-sn-phosphoglycerides. In Laticauda colubrina (Yellow-lipped sea krait), this protein is Basic phospholipase A2 2.